Consider the following 389-residue polypeptide: Methane monooxygenase component A beta chain (389 aa).

In terms of assembly, m.capsulatus has two forms of methane monooxygenase, a soluble and a membrane-bound type. The soluble type consists of four components (A to D): protein A, comprising three chains, in an alpha-2, beta-2, gamma-2 configuration, is a nonheme iron protein containing an unusual mu-hydroxo bridge structure at its active site and interacts with both oxygen and methane.

It carries out the reaction methane + NADH + O2 + H(+) = methanol + NAD(+) + H2O. The catalysed reaction is methane + NADPH + O2 + H(+) = methanol + NADP(+) + H2O. In terms of biological role, responsible for the initial oxygenation of methane to methanol in methanotrophs. It also catalyzes the monohydroxylation of a variety of unactivated alkenes, alicyclic, aromatic and heterocyclic compounds. The protein is Methane monooxygenase component A beta chain (mmoY) of Methylococcus capsulatus (strain ATCC 33009 / NCIMB 11132 / Bath).